Consider the following 174-residue polypeptide: Heat shock protein 22 (174 aa).

Residues 44–154 (QIARWQEQEF…TLKEREVTIE (111 aa)) enclose the sHSP domain. A Phosphothreonine modification is found at threonine 152. The interval 152 to 174 (TIEQTGEPAKKSAEEPNDKAASQ) is disordered. Residues 159–174 (PAKKSAEEPNDKAASQ) show a composition bias toward basic and acidic residues.

The protein belongs to the small heat shock protein (HSP20) family.

The protein is Heat shock protein 22 (Hsp22) of Drosophila melanogaster (Fruit fly).